The sequence spans 957 residues: Glycine dehydrogenase (decarboxylating) (957 aa).

Lys-708 is modified (N6-(pyridoxal phosphate)lysine).

This sequence belongs to the GcvP family. As to quaternary structure, the glycine cleavage system is composed of four proteins: P, T, L and H. It depends on pyridoxal 5'-phosphate as a cofactor.

The catalysed reaction is N(6)-[(R)-lipoyl]-L-lysyl-[glycine-cleavage complex H protein] + glycine + H(+) = N(6)-[(R)-S(8)-aminomethyldihydrolipoyl]-L-lysyl-[glycine-cleavage complex H protein] + CO2. The glycine cleavage system catalyzes the degradation of glycine. The P protein binds the alpha-amino group of glycine through its pyridoxal phosphate cofactor; CO(2) is released and the remaining methylamine moiety is then transferred to the lipoamide cofactor of the H protein. The polypeptide is Glycine dehydrogenase (decarboxylating) (Salmonella agona (strain SL483)).